A 1915-amino-acid polypeptide reads, in one-letter code: Protein NLRC5 (1915 aa).

Residues 103-137 (LGAGEESCPGPQLYHGAKRPFQSYGSSPRRKNSKK) are disordered. Positions 223–542 (RVTVLLGKAG…HTVDKDTLVE (320 aa)) constitute an NACHT domain. Position 229-236 (229-236 (GKAGMGKT)) interacts with ATP. LRR repeat units follow at residues 622–646 (VAET…SFHN), 716–740 (MGSL…LIQT), 744–771 (CSQL…LLPS), 772–796 (LPKL…LVKV), 871–898 (SPQL…AASQ), 900–923 (HIAQ…VLKA), 930–953 (LEDL…PREQ), 1006–1033 (THNL…LLPG), 1034–1055 (LGPL…VFSL), 1138–1161 (EVQL…LPQL), 1162–1184 (PQLS…LLAD), 1240–1263 (CNAL…CLLE), 1265–1292 (LPQL…LLET), 1348–1371 (AQQL…MLLN), 1481–1504 (SKLL…FSQV), 1519–1542 (CHHL…LLMG), 1552–1575 (KLHL…LSRM), 1576–1598 (TLLQ…CLAA), 1603–1626 (LPEL…CLAA), 1631–1654 (LPEL…CLAA), 1659–1682 (LPEL…CLAA), 1687–1711 (LPEL…LVKS), 1715–1738 (FEHL…ELAQ), 1741–1768 (PPQL…ALEQ), 1769–1795 (CPHI…RLPL), 1821–1845 (FPAL…LAQV), and 1849–1872 (MGQL…LLAQ).

This sequence belongs to the NLRP family. As to quaternary structure, interacts with CHUK and IKBKB; prevents CHUK and IKBKB phosphorylation and inhibits their kinase activity. Interacts with RIGI and IFIH1; blocks the interaction of MAVS to RIGI. As to expression, expressed in spleen, thymus and lung.

It localises to the cytoplasm. Its function is as follows. Probable regulator of the NF-kappa-B and type I interferon signaling pathways. May also regulate the type II interferon signaling pathway. Plays a role in homeostatic control of innate immunity and in antiviral defense mechanisms. The protein is Protein NLRC5 (Nlrc5) of Mus musculus (Mouse).